A 515-amino-acid chain; its full sequence is Membrane-bound lytic murein transglycosylase F (515 aa).

The N-terminal stretch at 1–32 is a signal peptide; sequence MKKLKINYLFIGILTLLLAAALWPSIPWFGKA. The interval 33–269 is non-LT domain; that stretch reads DNRIAAIQSR…RMEEKYLGHG (237 aa). The segment at 270–515 is LT domain; sequence DDFDYVDTRT…PFSLKKKDEN (246 aa). Glutamate 314 is an active-site residue. Residues 493–515 form a disordered region; that stretch reads QPSSNYLSHSPSLPFSLKKKDEN.

The protein in the N-terminal section; belongs to the bacterial solute-binding protein 3 family. It in the C-terminal section; belongs to the transglycosylase Slt family.

The protein localises to the cell outer membrane. It catalyses the reaction Exolytic cleavage of the (1-&gt;4)-beta-glycosidic linkage between N-acetylmuramic acid (MurNAc) and N-acetylglucosamine (GlcNAc) residues in peptidoglycan, from either the reducing or the non-reducing ends of the peptidoglycan chains, with concomitant formation of a 1,6-anhydrobond in the MurNAc residue.. In terms of biological role, murein-degrading enzyme that degrades murein glycan strands and insoluble, high-molecular weight murein sacculi, with the concomitant formation of a 1,6-anhydromuramoyl product. Lytic transglycosylases (LTs) play an integral role in the metabolism of the peptidoglycan (PG) sacculus. Their lytic action creates space within the PG sacculus to allow for its expansion as well as for the insertion of various structures such as secretion systems and flagella. In Citrobacter koseri (strain ATCC BAA-895 / CDC 4225-83 / SGSC4696), this protein is Membrane-bound lytic murein transglycosylase F.